The chain runs to 465 residues: Cystathionine beta-lyase (465 aa).

Lysine 213 carries the post-translational modification N6-(pyridoxal phosphate)lysine.

Belongs to the trans-sulfuration enzymes family. Requires pyridoxal 5'-phosphate as cofactor.

The protein resides in the cytoplasm. It localises to the nucleus. It catalyses the reaction L,L-cystathionine + H2O = L-homocysteine + pyruvate + NH4(+). It carries out the reaction an S-substituted L-cysteine + H2O = a thiol + pyruvate + NH4(+). It functions in the pathway amino-acid biosynthesis; L-methionine biosynthesis via de novo pathway; L-homocysteine from L-cystathionine: step 1/1. The polypeptide is Cystathionine beta-lyase (STR3) (Saccharomyces cerevisiae (strain ATCC 204508 / S288c) (Baker's yeast)).